The chain runs to 155 residues: MRIKLIAVGSRMPRWVEEGWQEYVKRLPAELPLELVEIPLNTRGKNADVARLIRQEGEAMLSKVQPGERIVTLEVHGKPWSTEQLAAELERWRLDARNVNLMVGGPEGLAPEVCARSEQRWSLSPLTLPHPLVRILLGEQIYRAWTVLSGHPYHK.

S-adenosyl-L-methionine contacts are provided by residues leucine 73, glycine 104, and 123–128; that span reads LSPLTL.

The protein belongs to the RNA methyltransferase RlmH family. Homodimer.

Its subcellular location is the cytoplasm. The catalysed reaction is pseudouridine(1915) in 23S rRNA + S-adenosyl-L-methionine = N(3)-methylpseudouridine(1915) in 23S rRNA + S-adenosyl-L-homocysteine + H(+). Functionally, specifically methylates the pseudouridine at position 1915 (m3Psi1915) in 23S rRNA. This Ectopseudomonas mendocina (strain ymp) (Pseudomonas mendocina) protein is Ribosomal RNA large subunit methyltransferase H.